Here is a 197-residue protein sequence, read N- to C-terminus: MTDASISPSSPVPASTELGDVTRYLRERIRTVPDWPQLGVMFRDITPLLQDPKSLRVLVDVFVHRYMGQGLNLVAGIDARGFILGSIVAYELNLGFVPIRKKGKLPFTTVAEEYMLEYGSATVEIHADACKPGDRVLLIDDLIATGGTMMAGKRLLERLGATVVEGAAIVDLPELGGSRLLMDGGLPLFTVCRFDGH.

This sequence belongs to the purine/pyrimidine phosphoribosyltransferase family. Homodimer.

The protein resides in the cytoplasm. The enzyme catalyses AMP + diphosphate = 5-phospho-alpha-D-ribose 1-diphosphate + adenine. It functions in the pathway purine metabolism; AMP biosynthesis via salvage pathway; AMP from adenine: step 1/1. Functionally, catalyzes a salvage reaction resulting in the formation of AMP, that is energically less costly than de novo synthesis. The protein is Adenine phosphoribosyltransferase of Ralstonia nicotianae (strain ATCC BAA-1114 / GMI1000) (Ralstonia solanacearum).